Here is a 436-residue protein sequence, read N- to C-terminus: MITAETNVFESLESNVRGYCRNWPTVFTTAKGAWLQDEDGKDYLDFFAGAGALNYGHNNPVLKQPLIDYIASDGITHGLDMSTAAKRKLLETLRDTVFAPRGLDYKVQFPGPTGANAVEAALKLARKVTGRETVLSFTNAFHGMTLGALSVTGNAAKRAGAGVPLVHAAHMPYDGYFDNTTADFQWMERVLDDTSSGFDRPAAVIVETVQGEGGINVARVEWLQHLAQLCAEREILLIVDDVQMGCGRTGPFFSFEVAGITPDIVTLSKSIGGYGLPLALVLFKPELDQWAPGEHNGTFRGNNPAFVTAQVALETFWSDGALEAATKAKGEKVATELATVAGHFPGLSTRGRGLVHGIAFEDPSQAGKVCQVAFERGLLVETSGSSDEVVKLLPPLTITDDELDQGLQILTGAIDTVCTGWGRLHHRAPAEGGERR.

Position 269 is an N6-(pyridoxal phosphate)lysine (K269).

Belongs to the class-III pyridoxal-phosphate-dependent aminotransferase family. It depends on pyridoxal 5'-phosphate as a cofactor.

The catalysed reaction is L-2,4-diaminobutanoate + 2-oxoglutarate = L-aspartate 4-semialdehyde + L-glutamate. It functions in the pathway amine and polyamine biosynthesis; ectoine biosynthesis; L-ectoine from L-aspartate 4-semialdehyde: step 1/3. Functionally, catalyzes reversively the conversion of L-aspartate beta-semialdehyde (ASA) to L-2,4-diaminobutyrate (DABA) by transamination with L-glutamate. The polypeptide is Diaminobutyrate--2-oxoglutarate transaminase (ectB) (Nocardia farcinica (strain IFM 10152)).